We begin with the raw amino-acid sequence, 344 residues long: Ig alpha chain C region (344 aa).

One can recognise an Ig-like 1 domain in the interval 6–99 (PTIYPLTLPP…SNPVQELDVN (94 aa)). 2 disulfide bridges follow: Cys-26–Cys-84 and Cys-76–Cys-100. N-linked (GlcNAc...) asparagine glycans are attached at residues Asn-38 and Asn-99. O-linked (GalNAc) serine; in variant MOPC 47A glycosylation is present at Ser-101. Intrachain disulfides connect Cys-114–Cys-171 and Cys-138–Cys-195. Ig-like domains follow at residues 116–206 (PSLS…GTLT) and 219–321 (PQVH…KTID). N-linked (GlcNAc...) asparagine glycosylation is present at Asn-329. Ser-331 carries N-linked (GlcNAc...) asparagine; in variant M511 glycosylation.

Ig alpha is the major immunoglobulin class in body secretions. It may serve both to defend against local infection and to prevent access of foreign antigens to the general immunologic system. The chain is Ig alpha chain C region from Mus musculus (Mouse).